Here is a 660-residue protein sequence, read N- to C-terminus: Bifunctional polymyxin resistance protein ArnA (660 aa).

Residues 1 to 304 (MKAVIFAYHD…TLGLVAGARL (304 aa)) form a formyltransferase ArnAFT region. His104 functions as the Proton donor; for formyltransferase activity in the catalytic mechanism. (6R)-10-formyltetrahydrofolate-binding positions include Arg114 and 136-140 (VKRAD). Residues 314–660 (RRIRVLILGV…RSVDVAERAS (347 aa)) form a dehydrogenase ArnADH region. NAD(+) is bound by residues Asp347 and 368 to 369 (DI). Residues Ala393, Tyr398, and 432-433 (TS) each bind UDP-alpha-D-glucuronate. Catalysis depends on Glu434, which acts as the Proton acceptor; for decarboxylase activity. Residues Arg460, Asn492, 526-535 (KLIDGGQQKR), and Tyr613 each bind UDP-alpha-D-glucuronate. Residue Arg619 is the Proton donor; for decarboxylase activity of the active site.

It in the N-terminal section; belongs to the Fmt family. UDP-L-Ara4N formyltransferase subfamily. In the C-terminal section; belongs to the NAD(P)-dependent epimerase/dehydratase family. UDP-glucuronic acid decarboxylase subfamily. Homohexamer, formed by a dimer of trimers.

It carries out the reaction UDP-alpha-D-glucuronate + NAD(+) = UDP-beta-L-threo-pentopyranos-4-ulose + CO2 + NADH. The enzyme catalyses UDP-4-amino-4-deoxy-beta-L-arabinose + (6R)-10-formyltetrahydrofolate = UDP-4-deoxy-4-formamido-beta-L-arabinose + (6S)-5,6,7,8-tetrahydrofolate + H(+). Its pathway is nucleotide-sugar biosynthesis; UDP-4-deoxy-4-formamido-beta-L-arabinose biosynthesis; UDP-4-deoxy-4-formamido-beta-L-arabinose from UDP-alpha-D-glucuronate: step 1/3. It participates in nucleotide-sugar biosynthesis; UDP-4-deoxy-4-formamido-beta-L-arabinose biosynthesis; UDP-4-deoxy-4-formamido-beta-L-arabinose from UDP-alpha-D-glucuronate: step 3/3. The protein operates within bacterial outer membrane biogenesis; lipopolysaccharide biosynthesis. Its function is as follows. Bifunctional enzyme that catalyzes the oxidative decarboxylation of UDP-glucuronic acid (UDP-GlcUA) to UDP-4-keto-arabinose (UDP-Ara4O) and the addition of a formyl group to UDP-4-amino-4-deoxy-L-arabinose (UDP-L-Ara4N) to form UDP-L-4-formamido-arabinose (UDP-L-Ara4FN). The modified arabinose is attached to lipid A and is required for resistance to polymyxin and cationic antimicrobial peptides. The protein is Bifunctional polymyxin resistance protein ArnA of Salmonella dublin (strain CT_02021853).